The sequence spans 231 residues: Large ribosomal subunit protein uL1 (231 aa).

It belongs to the universal ribosomal protein uL1 family. As to quaternary structure, part of the 50S ribosomal subunit.

Its function is as follows. Binds directly to 23S rRNA. The L1 stalk is quite mobile in the ribosome, and is involved in E site tRNA release. Functionally, protein L1 is also a translational repressor protein, it controls the translation of the L11 operon by binding to its mRNA. In Neisseria gonorrhoeae (strain ATCC 700825 / FA 1090), this protein is Large ribosomal subunit protein uL1.